The sequence spans 232 residues: MNRSRLISCTALVLALIAQNSFAGGVALSSTRVIYDGSRKEASLTVNNKSTTDEFLIQSWIDDANGNKKTPFIITPPLFKLSPTKNNVLRIVNTTNTLPQDRESVYWINVKAIPAKSEDAEAKNVLQIAVRTRLKLFYRPAGLKGNSMDGWNKLQFTSAGANQIKVENPSAFNLTFNKFYANGRDIEKTGMVPAKGSLNIELPAGTGKVSEVKYNIINDFGTAGDMLTQRVN.

Residues 1-23 form the signal peptide; that stretch reads MNRSRLISCTALVLALIAQNSFA.

The protein belongs to the periplasmic pilus chaperone family.

The protein resides in the periplasm. In terms of biological role, required for the biogenesis of long polar fimbria; binds and interact with LpfA. This Salmonella typhimurium (strain LT2 / SGSC1412 / ATCC 700720) protein is Chaperone protein LpfB (lpfB).